The chain runs to 718 residues: Amino-acid acetyltransferase, mitochondrial (718 aa).

The N-terminal 36 residues, 1-36 (MNPNAVWPRTAQSSLKKHQVSLCTCQRRSHYRLRSF), are a transit peptide targeting the mitochondrion. Residues 97-116 (QHQPDLPQKPTSAPASTAKI) are disordered. The 170-residue stretch at 539–708 (RQPRLRLDDP…YEAVCRSIQP (170 aa)) folds into the N-acetyltransferase domain.

This sequence belongs to the acetyltransferase family.

Its subcellular location is the mitochondrion. It catalyses the reaction L-glutamate + acetyl-CoA = N-acetyl-L-glutamate + CoA + H(+). Its pathway is amino-acid biosynthesis; L-arginine biosynthesis; N(2)-acetyl-L-ornithine from L-glutamate: step 1/4. N-acetylglutamate synthase involved in arginine biosynthesis. This Aspergillus clavatus (strain ATCC 1007 / CBS 513.65 / DSM 816 / NCTC 3887 / NRRL 1 / QM 1276 / 107) protein is Amino-acid acetyltransferase, mitochondrial (arg2).